Here is a 129-residue protein sequence, read N- to C-terminus: Small ribosomal subunit protein uS11 (129 aa).

This sequence belongs to the universal ribosomal protein uS11 family. As to quaternary structure, part of the 30S ribosomal subunit. Interacts with proteins S7 and S18. Binds to IF-3.

Located on the platform of the 30S subunit, it bridges several disparate RNA helices of the 16S rRNA. Forms part of the Shine-Dalgarno cleft in the 70S ribosome. The protein is Small ribosomal subunit protein uS11 of Jannaschia sp. (strain CCS1).